The following is a 1438-amino-acid chain: DNA polymerase III PolC-type (1438 aa).

The region spanning 422 to 578 (YVVFDVETTG…YDTEATAYMF (157 aa)) is the Exonuclease domain.

Belongs to the DNA polymerase type-C family. PolC subfamily.

It is found in the cytoplasm. It catalyses the reaction DNA(n) + a 2'-deoxyribonucleoside 5'-triphosphate = DNA(n+1) + diphosphate. In terms of biological role, required for replicative DNA synthesis. This DNA polymerase also exhibits 3' to 5' exonuclease activity. In Staphylococcus saprophyticus subsp. saprophyticus (strain ATCC 15305 / DSM 20229 / NCIMB 8711 / NCTC 7292 / S-41), this protein is DNA polymerase III PolC-type.